The chain runs to 359 residues: 4-galactosyl-N-acetylglucosaminide 3-alpha-L-fucosyltransferase 9 (359 aa).

The Cytoplasmic portion of the chain corresponds to 1-11; it reads MTSTSKGILRP. Residues 12–32 form a helical; Signal-anchor for type II membrane protein membrane-spanning segment; sequence FLIVCIILGCFMACLLIYIKP. At 33–359 the chain is on the lumenal side; the sequence is TNSWIFSPME…VGNLEKWFWN (327 aa). N-linked (GlcNAc...) asparagine glycosylation occurs at Asn-62. Positions 63–168 are acceptor-binding; sequence ETTILVWVWP…RRDSDIQVPY (106 aa). Gln-75 provides a ligand contact to a beta-D-galactosyl-(1-&gt;4)-N-acetyl-beta-D-glucosaminyl derivative. 3 cysteine pairs are disulfide-bonded: Cys-82–Cys-335, Cys-91–Cys-338, and Cys-190–Cys-238. N-linked (GlcNAc...) asparagine glycosylation is present at Asn-101. An a beta-D-galactosyl-(1-&gt;4)-N-acetyl-beta-D-glucosaminyl derivative-binding site is contributed by Glu-137. Glu-137 acts as the Nucleophile in catalysis. Glu-137 provides a ligand contact to GDP-beta-L-fucose. The N-linked (GlcNAc...) asparagine glycan is linked to Asn-153. GDP-beta-L-fucose contacts are provided by Tyr-168, Val-192, Ser-194, Asn-195, Arg-202, Val-226, Tyr-241, Asn-246, Tyr-252, Glu-255, and Lys-256. Residues 169–326 are donor-binding; sequence GFLTVSTNPF…NWRKDFTVNL (158 aa). Residues 327-359 are acceptor-binding; the sequence is PRFWESHACLACDHVKRHQEYKSVGNLEKWFWN.

This sequence belongs to the glycosyltransferase 10 family. In terms of assembly, homodimer. Post-translationally, N-glycosylated with complex-type N-glycans. The glycan alpha-D-Man-(1-&gt;3)-beta-D-Man-(1-&gt;4)-GlcNAc-(1-&gt;4)-GlcNAc is attached at Asn-153. As to expression, strongly expressed in forebrain and stomach, lower expression in spleen and peripheral blood leukocytes, and no expression in small intestine, colon, liver, lung, kidney, adrenal cortex or uterus. Highly expressed in granulocytes. Not expressed in monocytes.

The protein resides in the golgi apparatus. The protein localises to the trans-Golgi network membrane. It is found in the golgi apparatus membrane. The enzyme catalyses a beta-D-galactosyl-(1-&gt;4)-N-acetyl-beta-D-glucosaminyl derivative + GDP-beta-L-fucose = a beta-D-galactosyl-(1-&gt;4)-[alpha-L-fucosyl-(1-&gt;3)]-N-acetyl-beta-D-glucosaminyl derivative + GDP + H(+). The catalysed reaction is an alpha-Neu5Ac-(2-&gt;3)-beta-D-Gal-(1-&gt;4)-beta-D-GlcNAc-(1-&gt;3)-beta-D-Gal-(1-&gt;4)-beta-D-GlcNAc derivative + GDP-beta-L-fucose = an alpha-Neu5Ac-(2-&gt;3)-beta-D-Gal-(1-&gt;4)-beta-D-GlcNAc-(1-&gt;3)-beta-D-Gal-(1-&gt;4)-[alpha-L-Fuc-(1-&gt;3)]-beta-D-GlcNAc derivative + GDP + H(+). It carries out the reaction alpha-N-glycoloylneuraminosyl-(2-&gt;3)-beta-D-galactosyl-(1-&gt;4)-N-acetyl-beta-D-glucosaminyl-(1-&gt;3)-beta-D-galactosyl-(1-&gt;4)-N-acetyl-beta-D-glucosaminyl-(1-&gt;3)-beta-D-galactosyl-(1-&gt;4)-beta-D-glucosyl-(1&lt;-&gt;1')-ceramide + GDP-beta-L-fucose = alpha-N-glycoloylneuraminosyl-(2-&gt;3)-beta-D-galactosyl-(1-&gt;4)-N-acetyl-beta-D-glucosaminyl-(1-&gt;3)-beta-D-galactosyl-(1-&gt;4)-[alpha-L-fucosyl-(1-&gt;3)]-N-acetyl-beta-D-glucosaminyl-(1-&gt;3)-beta-D-galactosyl-(1-&gt;4)-beta-D-glucosyl-(1&lt;-&gt;1')-ceramide + GDP + H(+). It catalyses the reaction alpha-D-galactosyl-(1-&gt;3)-beta-D-galactosyl-(1-&gt;4)-N-acetyl-beta-D-glucosaminyl-(1-&gt;3)-beta-D-galactosyl-(1-&gt;4)-beta-D-glucosyl-(1&lt;-&gt;1')-ceramide + GDP-beta-L-fucose = a neolactoside IV(3)-alpha-Gal,III(3)-alpha-Fuc-nLc4Cer + GDP + H(+). The enzyme catalyses a neolactoside nLc4Cer + GDP-beta-L-fucose = a neolactoside III(3)-alpha-Fuc-nLc4Cer + GDP + H(+). The catalysed reaction is an N-acetyl-alpha-neuraminyl-(2-&gt;3)-beta-D-galactosyl-(1-&gt;4)-N-acetyl-beta-D-glucosaminyl derivative + GDP-beta-L-fucose = an alpha-Neu5Ac-(2-&gt;3)-beta-D-Gal-(1-&gt;4)-[alpha-L-Fuc-(1-&gt;3)]-beta-D-GlcNAc derivative + GDP + H(+). It carries out the reaction beta-D-Gal-(1-&gt;4)-beta-D-GlcNAc-(1-&gt;3)-beta-D-Gal-(1-&gt;4)-D-Glc + GDP-beta-L-fucose = beta-D-Gal-(1-&gt;4)-[alpha-L-Fuc-(1-&gt;3)]-beta-D-GlcNAc-(1-&gt;3)-beta-D-Gal-(1-&gt;4)-D-Glc + GDP + H(+). It catalyses the reaction an alpha-L-Fuc-(1-&gt;2)-beta-D-Gal-(1-&gt;4)-beta-D-GlcNAc derivative + GDP-beta-L-fucose = an alpha-L-Fuc-(1-&gt;2)-beta-D-Gal-(1-&gt;4)-[alpha-L-Fuc-(1-&gt;3)]-beta-D-GlcNAc derivative + GDP + H(+). Its pathway is protein modification; protein glycosylation. The protein operates within glycolipid biosynthesis. Its activity is regulated as follows. Activated by Mn2+. Its function is as follows. Catalyzes alpha(1-&gt;3) linkage of fucosyl moiety transferred from GDP-beta-L-fucose to N-acetyl glucosamine (GlcNAc) within type 2 lactosamine (LacNAc, beta-D-Gal-(1-&gt;4)-beta-D-GlcNAc-) glycan attached to glycolipids and N- or O-linked glycoproteins. Fucosylates distal type 2 LacNAc and its fucosylated (H-type 2 LacNAc) and sialylated (sialyl-type 2 LacNAc) derivatives to form Lewis x (Lex) (CD15) and Lewis y (Ley) antigenic epitopes involved in cell adhesion and differentiation. Generates Lex epitopes in the brain, presumably playing a role in the maintenance of neuronal stemness and neurite outgrowth in progenitor neural cells. Fucosylates the internal type 2 LacNAc unit of the polylactosamine chain to form VIM-2 antigen that serves as recognition epitope for SELE. Can also modify milk oligosaccharides, in particular type 2 tetrasaccharide LNnT. The chain is 4-galactosyl-N-acetylglucosaminide 3-alpha-L-fucosyltransferase 9 from Homo sapiens (Human).